Here is a 428-residue protein sequence, read N- to C-terminus: Gamma-glutamyl phosphate reductase (428 aa).

The protein belongs to the gamma-glutamyl phosphate reductase family.

It is found in the cytoplasm. The catalysed reaction is L-glutamate 5-semialdehyde + phosphate + NADP(+) = L-glutamyl 5-phosphate + NADPH + H(+). Its pathway is amino-acid biosynthesis; L-proline biosynthesis; L-glutamate 5-semialdehyde from L-glutamate: step 2/2. Catalyzes the NADPH-dependent reduction of L-glutamate 5-phosphate into L-glutamate 5-semialdehyde and phosphate. The product spontaneously undergoes cyclization to form 1-pyrroline-5-carboxylate. The sequence is that of Gamma-glutamyl phosphate reductase from Treponema pallidum (strain Nichols).